The chain runs to 297 residues: Putative S-adenosyl-L-methionine-dependent methyltransferase Mjls_1072 (297 aa).

Residues Asp124 and 153–154 contribute to the S-adenosyl-L-methionine site; that span reads DL.

It belongs to the UPF0677 family.

Exhibits S-adenosyl-L-methionine-dependent methyltransferase activity. In Mycobacterium sp. (strain JLS), this protein is Putative S-adenosyl-L-methionine-dependent methyltransferase Mjls_1072.